The following is a 339-amino-acid chain: uncharacterized protein (339 aa).

A signal peptide spans 1–29 (MIKQVCKNITICSLALSTALTVFPASSYA).

The protein belongs to the aerolysin family.

This is an uncharacterized protein from Staphylococcus aureus (strain MRSA252).